A 362-amino-acid chain; its full sequence is Serpentine receptor class delta-2 (362 aa).

The next 7 helical transmembrane spans lie at 27-47 (LSCL…YLIW), 57-77 (YAIY…ISFF), 104-124 (FCYF…WILL), 144-164 (LIRN…VYVF), 209-229 (LISI…ILYF), 264-284 (GIPI…FGII), and 292-312 (ITFR…IIFV).

This sequence belongs to the nematode receptor-like protein srd family.

The protein resides in the membrane. Functionally, thought to be a chemosensory receptor. The chain is Serpentine receptor class delta-2 (srd-2) from Caenorhabditis elegans.